The following is a 180-amino-acid chain: ATP synthase subunit delta (180 aa).

It belongs to the ATPase delta chain family. In terms of assembly, F-type ATPases have 2 components, F(1) - the catalytic core - and F(0) - the membrane proton channel. F(1) has five subunits: alpha(3), beta(3), gamma(1), delta(1), epsilon(1). F(0) has three main subunits: a(1), b(2) and c(10-14). The alpha and beta chains form an alternating ring which encloses part of the gamma chain. F(1) is attached to F(0) by a central stalk formed by the gamma and epsilon chains, while a peripheral stalk is formed by the delta and b chains.

Its subcellular location is the cell membrane. Its function is as follows. F(1)F(0) ATP synthase produces ATP from ADP in the presence of a proton or sodium gradient. F-type ATPases consist of two structural domains, F(1) containing the extramembraneous catalytic core and F(0) containing the membrane proton channel, linked together by a central stalk and a peripheral stalk. During catalysis, ATP synthesis in the catalytic domain of F(1) is coupled via a rotary mechanism of the central stalk subunits to proton translocation. This protein is part of the stalk that links CF(0) to CF(1). It either transmits conformational changes from CF(0) to CF(1) or is implicated in proton conduction. The sequence is that of ATP synthase subunit delta from Leuconostoc mesenteroides subsp. mesenteroides (strain ATCC 8293 / DSM 20343 / BCRC 11652 / CCM 1803 / JCM 6124 / NCDO 523 / NBRC 100496 / NCIMB 8023 / NCTC 12954 / NRRL B-1118 / 37Y).